A 207-amino-acid chain; its full sequence is dTTP/UTP pyrophosphatase (207 aa).

Asp87 (proton acceptor) is an active-site residue.

This sequence belongs to the Maf family. YhdE subfamily. Requires a divalent metal cation as cofactor.

Its subcellular location is the cytoplasm. It catalyses the reaction dTTP + H2O = dTMP + diphosphate + H(+). The enzyme catalyses UTP + H2O = UMP + diphosphate + H(+). Its function is as follows. Nucleoside triphosphate pyrophosphatase that hydrolyzes dTTP and UTP. May have a dual role in cell division arrest and in preventing the incorporation of modified nucleotides into cellular nucleic acids. In Bordetella bronchiseptica (strain ATCC BAA-588 / NCTC 13252 / RB50) (Alcaligenes bronchisepticus), this protein is dTTP/UTP pyrophosphatase.